An 810-amino-acid chain; its full sequence is LPS-assembly protein LptD (810 aa).

An N-terminal signal peptide occupies residues 1 to 29 (MTKWTLGYSYPIALTISLIPALTPAIVQA).

It belongs to the LptD family. In terms of assembly, component of the lipopolysaccharide transport and assembly complex. Interacts with LptE and LptA.

Its subcellular location is the cell outer membrane. In terms of biological role, together with LptE, is involved in the assembly of lipopolysaccharide (LPS) at the surface of the outer membrane. In Aeromonas salmonicida (strain A449), this protein is LPS-assembly protein LptD.